A 184-amino-acid polypeptide reads, in one-letter code: ATP synthase subunit b, chloroplastic (184 aa).

The chain crosses the membrane as a helical span at residues 29-49 (TNLINLGVVLGLLVYFGKGVL).

This sequence belongs to the ATPase B chain family. F-type ATPases have 2 components, F(1) - the catalytic core - and F(0) - the membrane proton channel. F(1) has five subunits: alpha(3), beta(3), gamma(1), delta(1), epsilon(1). F(0) has four main subunits: a(1), b(1), b'(1) and c(10-14). The alpha and beta chains form an alternating ring which encloses part of the gamma chain. F(1) is attached to F(0) by a central stalk formed by the gamma and epsilon chains, while a peripheral stalk is formed by the delta, b and b' chains.

It localises to the plastid. Its subcellular location is the chloroplast thylakoid membrane. F(1)F(0) ATP synthase produces ATP from ADP in the presence of a proton or sodium gradient. F-type ATPases consist of two structural domains, F(1) containing the extramembraneous catalytic core and F(0) containing the membrane proton channel, linked together by a central stalk and a peripheral stalk. During catalysis, ATP synthesis in the catalytic domain of F(1) is coupled via a rotary mechanism of the central stalk subunits to proton translocation. Its function is as follows. Component of the F(0) channel, it forms part of the peripheral stalk, linking F(1) to F(0). The chain is ATP synthase subunit b, chloroplastic from Anthoceros angustus (Hornwort).